Reading from the N-terminus, the 257-residue chain is UPF0246 protein RSKD131_2757 (257 aa).

The protein belongs to the UPF0246 family.

This chain is UPF0246 protein RSKD131_2757, found in Cereibacter sphaeroides (strain KD131 / KCTC 12085) (Rhodobacter sphaeroides).